We begin with the raw amino-acid sequence, 237 residues long: Protein YIPF4 (237 aa).

The Cytoplasmic portion of the chain corresponds to 1 to 106 (MQFSPTNGDF…FNRQVVRDNP (106 aa)). A helical membrane pass occupies residues 107-127 (DFWGPLAVVLLFSMISIYGQF). Residues 128–131 (RVVS) lie on the Lumenal side of the membrane. Residues 132-152 (WIITIWIFGSLTIFLLARVLG) form a helical membrane-spanning segment. Residues 153–160 (GEVSYGQV) are Cytoplasmic-facing. The chain crosses the membrane as a helical span at residues 161–181 (LGVIGYSLLPLIVIAPLLLVI). The Lumenal portion of the chain corresponds to 182-188 (GGFEVVS). A helical transmembrane segment spans residues 189 to 209 (TLIKLFGVFWAAYSAASLLVG). Residues 210–216 (DEFKTKK) lie on the Cytoplasmic side of the membrane. Residues 217-237 (PLLIYPIFLLYIYFLSLYTGV) traverse the membrane as a helical segment.

Belongs to the YIP1 family.

The protein resides in the golgi apparatus. It is found in the cis-Golgi network membrane. Functionally, involved in the maintenance of the Golgi structure. In Danio rerio (Zebrafish), this protein is Protein YIPF4 (yipf4).